The chain runs to 341 residues: KH domain-containing RNA-binding protein QKI (341 aa).

The segment at 11–82 is qua1 domain; involved in homodimerization; that stretch reads PKPTPDYLMQ…PDAVGPIVQL (72 aa). The KH domain maps to 87 to 153; it reads YVPVKEYPDF…WEHLNEDLHV (67 aa). The segment at 182-213 is qua2 domain; involved in RNA binding; that stretch reads AAEGEDSLKKMQLMELAILNGTYRDANIKSPA. The residue at position 188 (serine 188) is a Phosphoserine. An Omega-N-methylarginine modification is found at arginine 227. The residue at position 242 (arginine 242) is an Asymmetric dimethylarginine; by CARM1; alternate. Arginine 242 carries the omega-N-methylarginine; alternate modification. Position 256 is an omega-N-methylarginine (arginine 256). Positions 276 to 279 match the SH3-binding motif; the sequence is PPGP. A Nuclear localization signal motif is present at residues 324–330; it reads RVHPYQR.

It belongs to the quaking family. As to quaternary structure, homodimer; does not require RNA to homodimerize. Able to heterodimerize with BICC1. Methylated by PRMT1. Post-translationally, tyrosine phosphorylated at its C-terminus, probably by FYN. Phosphorylation leads to decreased mRNA-binding affinity, affecting transport and/or stabilization of MBP mRNA. In terms of processing, ubiquitinated by RNF6 in macrophages, leading to its degradation.

It localises to the nucleus. The protein localises to the cytoplasm. Functionally, RNA reader protein, which recognizes and binds specific RNAs, thereby regulating RNA metabolic processes, such as pre-mRNA splicing, circular RNA (circRNA) formation, mRNA export, mRNA stability and/or translation. Involved in various cellular processes, such as mRNA storage into stress granules, apoptosis, lipid deposition, interferon response, glial cell fate and development. Binds to the 5'-NACUAAY-N(1,20)-UAAY-3' RNA core sequence. Acts as a mRNA modification reader that specifically recognizes and binds mRNA transcripts modified by internal N(7)-methylguanine (m7G). Promotes the formation of circular RNAs (circRNAs) during the epithelial to mesenchymal transition and in cardiomyocytes: acts by binding to sites flanking circRNA-forming exons. CircRNAs are produced by back-splicing circularization of pre-mRNAs. Plays a central role in myelinization via 3 distinct mechanisms. First, acts by protecting and promoting stability of target mRNAs such as MBP, SIRT2 and CDKN1B, which promotes oligodendrocyte differentiation. Second, participates in mRNA transport by regulating the nuclear export of MBP mRNA. Finally, indirectly regulates mRNA splicing of MAG pre-mRNA during oligodendrocyte differentiation by acting as a negative regulator of MAG exon 12 alternative splicing: acts by binding to HNRNPA1 mRNA splicing factor, preventing its translation. Involved in microglia differentiation and remyelination by regulating microexon alternative splicing of the Rho GTPase pathway. Involved in macrophage differentiation: promotes monocyte differentiation by regulating pre-mRNA splicing in naive peripheral blood monocytes. Acts as an important regulator of muscle development: required for the contractile function of cardiomyocytes by regulating alternative splicing of cardiomyocyte transcripts. Acts as a negative regulator of thermogenesis by decreasing stability, nuclear export and translation of mRNAs encoding PPARGC1A and UCP1. Also required for visceral endoderm function and blood vessel development. May also play a role in smooth muscle development. In addition to its RNA-binding activity, also acts as a nuclear transcription coactivator for SREBF2/SREBP2. The chain is KH domain-containing RNA-binding protein QKI from Bos taurus (Bovine).